The primary structure comprises 145 residues: Toxin Res (145 aa).

This sequence belongs to the MbcT/ParT/Res family. As to quaternary structure, homodimer. Forms a complex with cognate antitoxin Xre; the 2 toxin molecules dimerize and each contacts an Xre homodimer. Most Res-Xre contacts are between the antitoxin molecule closest to the toxin.

Its function is as follows. Toxic component of a type II toxin-antitoxin (TA) system. Expression in E.coli inhibits cell growth. In vivo it is probably neutralized by cognate antitoxin Xre; this has not been shown upon expression in E.coli. Probably depletes intracellular NAD(+). This Pseudomonas putida (strain ATCC 47054 / DSM 6125 / CFBP 8728 / NCIMB 11950 / KT2440) protein is Toxin Res.